Reading from the N-terminus, the 185-residue chain is Ribosome maturation factor RimM (185 aa).

Residues P108–L183 form the PRC barrel domain.

It belongs to the RimM family. Binds ribosomal protein uS19.

It is found in the cytoplasm. Functionally, an accessory protein needed during the final step in the assembly of 30S ribosomal subunit, possibly for assembly of the head region. Essential for efficient processing of 16S rRNA. May be needed both before and after RbfA during the maturation of 16S rRNA. It has affinity for free ribosomal 30S subunits but not for 70S ribosomes. In Synechocystis sp. (strain ATCC 27184 / PCC 6803 / Kazusa), this protein is Ribosome maturation factor RimM.